A 149-amino-acid chain; its full sequence is MQVNIFYIQKSDEFKTWSEKYSKLISKYGTLKEINVFNKKIALAQNLNAIEAKKSYEEAFMPYKKGYCIALDERGKDLTSIEFAKLIQDKNELSFFIGGAYGLREEFNQSLDFRLSLSKLTLAHQFVKTLLLEQIYRAFCINNNHPYHK.

S-adenosyl-L-methionine-binding positions include L71, G98, and 117–122 (LSKLTL).

This sequence belongs to the RNA methyltransferase RlmH family. As to quaternary structure, homodimer.

Its subcellular location is the cytoplasm. The catalysed reaction is pseudouridine(1915) in 23S rRNA + S-adenosyl-L-methionine = N(3)-methylpseudouridine(1915) in 23S rRNA + S-adenosyl-L-homocysteine + H(+). In terms of biological role, specifically methylates the pseudouridine at position 1915 (m3Psi1915) in 23S rRNA. This is Ribosomal RNA large subunit methyltransferase H from Campylobacter jejuni subsp. doylei (strain ATCC BAA-1458 / RM4099 / 269.97).